Consider the following 969-residue polypeptide: RNA polymerase-associated protein RapA (969 aa).

The Helicase ATP-binding domain occupies 164-334 (EVGRRHAPRV…FARLRLLDAD (171 aa)). Residue 177 to 184 (DEVGLGKT) coordinates ATP. The short motif at 280–283 (DEAH) is the DEAH box element. The 155-residue stretch at 492 to 646 (RVNWLLEKVK…TCPTGRAVYD (155 aa)) folds into the Helicase C-terminal domain.

Belongs to the SNF2/RAD54 helicase family. RapA subfamily. Interacts with the RNAP. Has a higher affinity for the core RNAP than for the holoenzyme. Its ATPase activity is stimulated by binding to RNAP.

Functionally, transcription regulator that activates transcription by stimulating RNA polymerase (RNAP) recycling in case of stress conditions such as supercoiled DNA or high salt concentrations. Probably acts by releasing the RNAP, when it is trapped or immobilized on tightly supercoiled DNA. Does not activate transcription on linear DNA. Probably not involved in DNA repair. In Vibrio cholerae serotype O1 (strain ATCC 39315 / El Tor Inaba N16961), this protein is RNA polymerase-associated protein RapA.